The primary structure comprises 151 residues: 3-hydroxyacyl-[acyl-carrier-protein] dehydratase FabZ (151 aa).

The active site involves His-52.

This sequence belongs to the thioester dehydratase family. FabZ subfamily.

The protein resides in the cytoplasm. The catalysed reaction is a (3R)-hydroxyacyl-[ACP] = a (2E)-enoyl-[ACP] + H2O. In terms of biological role, involved in unsaturated fatty acids biosynthesis. Catalyzes the dehydration of short chain beta-hydroxyacyl-ACPs and long chain saturated and unsaturated beta-hydroxyacyl-ACPs. The chain is 3-hydroxyacyl-[acyl-carrier-protein] dehydratase FabZ (fabZ1) from Lactococcus lactis subsp. lactis (strain IL1403) (Streptococcus lactis).